The following is a 163-amino-acid chain: MVKKNSKKAAPATIARNKRATFEYRFEEKMEAGISLMGWEVKSIRMGKVNLSDCYVFLKNGEAFMHGCTIIPLNTASTHVVCDPIRLKKLLLSRKELDKLAGLVERQGYSIIPISMYWRKGAWVKVEIGLGKGKKDHDKREDTKAREWEVEKARVMKKEKTRG.

Belongs to the SmpB family.

It is found in the cytoplasm. Required for rescue of stalled ribosomes mediated by trans-translation. Binds to transfer-messenger RNA (tmRNA), required for stable association of tmRNA with ribosomes. tmRNA and SmpB together mimic tRNA shape, replacing the anticodon stem-loop with SmpB. tmRNA is encoded by the ssrA gene; the 2 termini fold to resemble tRNA(Ala) and it encodes a 'tag peptide', a short internal open reading frame. During trans-translation Ala-aminoacylated tmRNA acts like a tRNA, entering the A-site of stalled ribosomes, displacing the stalled mRNA. The ribosome then switches to translate the ORF on the tmRNA; the nascent peptide is terminated with the 'tag peptide' encoded by the tmRNA and targeted for degradation. The ribosome is freed to recommence translation, which seems to be the essential function of trans-translation. This Shewanella sp. (strain ANA-3) protein is SsrA-binding protein.